Reading from the N-terminus, the 405-residue chain is Argininosuccinate synthase (405 aa).

ATP is bound by residues 10–18 (AYSGGLDTS) and alanine 37. Tyrosine 88 and serine 93 together coordinate L-citrulline. Position 118 (glycine 118) interacts with ATP. Threonine 120, asparagine 124, and aspartate 125 together coordinate L-aspartate. Asparagine 124 lines the L-citrulline pocket. Residues arginine 128, serine 179, serine 188, glutamate 264, and tyrosine 276 each coordinate L-citrulline.

Belongs to the argininosuccinate synthase family. Type 1 subfamily. In terms of assembly, homotetramer.

Its subcellular location is the cytoplasm. It catalyses the reaction L-citrulline + L-aspartate + ATP = 2-(N(omega)-L-arginino)succinate + AMP + diphosphate + H(+). It functions in the pathway amino-acid biosynthesis; L-arginine biosynthesis; L-arginine from L-ornithine and carbamoyl phosphate: step 2/3. This Pseudomonas fluorescens (strain SBW25) protein is Argininosuccinate synthase.